The following is a 352-amino-acid chain: tRNA pseudouridine synthase D (352 aa).

Asp81 functions as the Nucleophile in the catalytic mechanism. Residues 157 to 303 enclose the TRUD domain; the sequence is GVPNYFGTQR…MDHERRILRL (147 aa).

This sequence belongs to the pseudouridine synthase TruD family.

It catalyses the reaction uridine(13) in tRNA = pseudouridine(13) in tRNA. Responsible for synthesis of pseudouridine from uracil-13 in transfer RNAs. In Pseudomonas putida (strain GB-1), this protein is tRNA pseudouridine synthase D.